The chain runs to 506 residues: Chromosomal replication initiator protein DnaA (506 aa).

The segment at 1–77 (MECATTATTP…IWAEESGAKR (77 aa)) is domain I, interacts with DnaA modulators. The tract at residues 77 to 162 (RRVDLAVRNA…AVAGDVASGS (86 aa)) is domain II. Basic and acidic residues-rich tracts occupy residues 103-112 (TERTDMHSGD) and 121-142 (SDGR…RAVE). Residues 103–142 (TERTDMHSGDTRQQSARISDGRSTDARGADGRGSDARAVE) are disordered. Residues 163–384 (PLDARLTFET…GALNKLLAFN (222 aa)) form a domain III, AAA+ region region. ATP is bound by residues Gly210, Gly212, Lys213, and Thr214. Positions 385–506 (QLTGEPVTLE…EVLKRLALEA (122 aa)) are domain IV, binds dsDNA.

This sequence belongs to the DnaA family. Oligomerizes as a right-handed, spiral filament on DNA at oriC.

Its subcellular location is the cytoplasm. Functionally, plays an essential role in the initiation and regulation of chromosomal replication. ATP-DnaA binds to the origin of replication (oriC) to initiate formation of the DNA replication initiation complex once per cell cycle. Binds the DnaA box (a 9 base pair repeat at the origin) and separates the double-stranded (ds)DNA. Forms a right-handed helical filament on oriC DNA; dsDNA binds to the exterior of the filament while single-stranded (ss)DNA is stabiized in the filament's interior. The ATP-DnaA-oriC complex binds and stabilizes one strand of the AT-rich DNA unwinding element (DUE), permitting loading of DNA polymerase. After initiation quickly degrades to an ADP-DnaA complex that is not apt for DNA replication. Binds acidic phospholipids. The protein is Chromosomal replication initiator protein DnaA of Xanthobacter autotrophicus (strain ATCC BAA-1158 / Py2).